Here is a 328-residue protein sequence, read N- to C-terminus: Carbonic anhydrase-related protein 11 (328 aa).

Residues 1-23 (MGAAARLSAPRALVLWAALGAAA) form the signal peptide. An Alpha-carbonic anhydrase domain is found at 33 to 303 (DWWSYKDNLQ…LAHRALRGNR (271 aa)). 3 N-linked (GlcNAc...) asparagine glycosylation sites follow: asparagine 118, asparagine 170, and asparagine 260. A disordered region spans residues 299-328 (LRGNRDPRHPERRCRGPNYRLHVDGAPHGR). A compositionally biased stretch (basic and acidic residues) spans 319–328 (LHVDGAPHGR).

It belongs to the alpha-carbonic anhydrase family.

It localises to the secreted. Functionally, does not have a catalytic activity. This chain is Carbonic anhydrase-related protein 11 (CA11), found in Pongo abelii (Sumatran orangutan).